The primary structure comprises 82 residues: Sulfur carrier protein TusA (82 aa).

Catalysis depends on cysteine 20, which acts as the Cysteine persulfide intermediate.

The protein belongs to the sulfur carrier protein TusA family.

It is found in the cytoplasm. Functionally, sulfur carrier protein which probably makes part of a sulfur-relay system. The sequence is that of Sulfur carrier protein TusA from Aeromonas hydrophila subsp. hydrophila (strain ATCC 7966 / DSM 30187 / BCRC 13018 / CCUG 14551 / JCM 1027 / KCTC 2358 / NCIMB 9240 / NCTC 8049).